The sequence spans 364 residues: Aminomethyltransferase (364 aa).

It belongs to the GcvT family. As to quaternary structure, the glycine cleavage system is composed of four proteins: P, T, L and H.

The catalysed reaction is N(6)-[(R)-S(8)-aminomethyldihydrolipoyl]-L-lysyl-[protein] + (6S)-5,6,7,8-tetrahydrofolate = N(6)-[(R)-dihydrolipoyl]-L-lysyl-[protein] + (6R)-5,10-methylene-5,6,7,8-tetrahydrofolate + NH4(+). Its function is as follows. The glycine cleavage system catalyzes the degradation of glycine. The chain is Aminomethyltransferase from Salmonella arizonae (strain ATCC BAA-731 / CDC346-86 / RSK2980).